Reading from the N-terminus, the 247-residue chain is Uridylate kinase (247 aa).

17–20 (KFSG) is an ATP binding site. Gly-59 provides a ligand contact to UMP. ATP-binding residues include Gly-60 and Arg-64. UMP-binding positions include Asp-79 and 140–147 (TGNPFFTT). 3 residues coordinate ATP: Thr-167, Tyr-173, and Asp-176.

This sequence belongs to the UMP kinase family. In terms of assembly, homohexamer.

It localises to the cytoplasm. The catalysed reaction is UMP + ATP = UDP + ADP. Its pathway is pyrimidine metabolism; CTP biosynthesis via de novo pathway; UDP from UMP (UMPK route): step 1/1. With respect to regulation, inhibited by UTP. Its function is as follows. Catalyzes the reversible phosphorylation of UMP to UDP. The polypeptide is Uridylate kinase (Legionella pneumophila (strain Paris)).